The sequence spans 279 residues: Putative short-chain type dehydrogenase/reductase MSMEG_6031/MSMEI_5872 (279 aa).

An NAD(+)-binding site is contributed by phenylalanine 11–aspartate 33. Lysine 65 is covalently cross-linked (Isoglutamyl lysine isopeptide (Lys-Gln) (interchain with Q-Cter in protein Pup)). Substrate is bound at residue serine 158. Tyrosine 171 functions as the Proton acceptor in the catalytic mechanism.

It belongs to the short-chain dehydrogenases/reductases (SDR) family.

This Mycolicibacterium smegmatis (strain ATCC 700084 / mc(2)155) (Mycobacterium smegmatis) protein is Putative short-chain type dehydrogenase/reductase MSMEG_6031/MSMEI_5872.